The sequence spans 332 residues: Capsular polysaccharide phosphotransferase WcwK (332 aa).

It belongs to the stealth family.

The polypeptide is Capsular polysaccharide phosphotransferase WcwK (wcwK) (Streptococcus pneumoniae).